Here is a 129-residue protein sequence, read N- to C-terminus: Mediator of RNA polymerase II transcription subunit 31-B (129 aa).

Belongs to the Mediator complex subunit 31 family. In terms of assembly, component of the Mediator complex.

The protein resides in the nucleus. Functionally, component of the Mediator complex, a coactivator involved in the regulated transcription of nearly all RNA polymerase II-dependent genes. Mediator functions as a bridge to convey information from gene-specific regulatory proteins to the basal RNA polymerase II transcription machinery. Mediator is recruited to promoters by direct interactions with regulatory proteins and serves as a scaffold for the assembly of a functional preinitiation complex with RNA polymerase II and the general transcription factors. In Xenopus laevis (African clawed frog), this protein is Mediator of RNA polymerase II transcription subunit 31-B (med31-b).